Here is a 77-residue protein sequence, read N- to C-terminus: Small nuclear ribonucleoprotein G (77 aa).

Residues 2–77 (VSTPELKKYM…IISLEALDAI (76 aa)) form the Sm domain.

It belongs to the snRNP Sm proteins family. Component of the Sm core complex, present in spliceosomal snRNP U1, U2, U4/U6 and U5. The core complex contains SMB1, SMD1, SMD2, SMD3, SME1, SMX3 and SMX2 (Sm proteins B, D1, D2, D3, E, F and G, respectively), and is probably a heptameric ring structure. SMX2 specifically interacts with SME1. Belongs to the CWC complex (or CEF1-associated complex), a spliceosome sub-complex reminiscent of a late-stage spliceosome composed of the U2, U5 and U6 snRNAs and at least BUD13, BUD31, BRR2, CDC40, CEF1, CLF1, CUS1, CWC2, CWC15, CWC21, CWC22, CWC23, CWC24, CWC25, CWC27, ECM2, HSH155, IST3, ISY1, LEA1, MSL1, NTC20, PRP8, PRP9, PRP11, PRP19, PRP21, PRP22, PRP45, PRP46, SLU7, SMB1, SMD1, SMD2, SMD3, SMX2, SMX3, SNT309, SNU114, SPP2, SYF1, SYF2, RSE1 and YJU2. Component of the U4/U6-U5 tri-snRNP complex composed of the U4, U6 and U5 snRNAs and at least PRP3, PRP4, PRP6, PRP8, PRP18, PRP31, PRP38, SNU13, SNU23, SNU66, SNU114, SPP381, SMB1, SMD1, SMD2, SMD3, SMX2, SMX3, LSM2, LSM3, LSM4, LSM5, LSM6, LSM7, LSM8, BRR2 and DIB1.

Its subcellular location is the nucleus. The protein localises to the cytoplasm. Functionally, plays a role in pre-mRNA splicing as a core component of the spliceosomal U1, U2, U4 and U5 small nuclear ribonucleoproteins (snRNPs), the building blocks of the spliceosome. In Saccharomyces cerevisiae (strain ATCC 204508 / S288c) (Baker's yeast), this protein is Small nuclear ribonucleoprotein G (SMX2).